The primary structure comprises 289 residues: uncharacterized protein (289 aa).

Positions 1–23 (MIKNYKLLLFTTFTLFFITFVSG) are cleaved as a signal peptide. N-linked (GlcNAc...) asparagine glycosylation is found at Asn-74, Asn-101, Asn-132, and Asn-285.

The protein localises to the secreted. This is an uncharacterized protein from Dictyostelium discoideum (Social amoeba).